Consider the following 913-residue polypeptide: ER degradation-enhancing alpha-mannosidase-like protein 3 (913 aa).

A signal peptide spans 1–15 (MGCPAVEARRWGDMW). A glycan (N-linked (GlcNAc...) asparagine) is linked at Asn104. Glu132 serves as the catalytic Proton donor. Residue Asn181 is glycosylated (N-linked (GlcNAc...) asparagine). Asp279 is a catalytic residue. The active-site Proton donor is the Glu373. The active site involves Glu391. Thr477 serves as a coordination point for Ca(2+). Asn497 is a glycosylation site (N-linked (GlcNAc...) asparagine). Positions 660-766 (LSKHLAGAQG…KEGNIILDAI (107 aa)) constitute a PA domain. N-linked (GlcNAc...) asparagine glycosylation is present at Asn797. The interval 823–895 (EESPVSQPEV…NKVQPMESIL (73 aa)) is disordered. Residues 826 to 839 (PVSQPEVPSSDSPS) are compositionally biased toward low complexity. The span at 843–866 (RTSERDITPESQEHKTEETEHSPK) shows a compositional bias: basic and acidic residues. Residues 910-913 (KDEL) carry the Prevents secretion from ER motif.

This sequence belongs to the glycosyl hydrolase 47 family. It depends on Ca(2+) as a cofactor.

The protein localises to the endoplasmic reticulum lumen. It catalyses the reaction N(4)-(alpha-D-Man-(1-&gt;2)-alpha-D-Man-(1-&gt;2)-alpha-D-Man-(1-&gt;3)-[alpha-D-Man-(1-&gt;2)-alpha-D-Man-(1-&gt;3)-[alpha-D-Man-(1-&gt;2)-alpha-D-Man-(1-&gt;6)]-alpha-D-Man-(1-&gt;6)]-beta-D-Man-(1-&gt;4)-beta-D-GlcNAc-(1-&gt;4)-beta-D-GlcNAc)-L-asparaginyl-[protein] (N-glucan mannose isomer 9A1,2,3B1,2,3) + 4 H2O = N(4)-(alpha-D-Man-(1-&gt;3)-[alpha-D-Man-(1-&gt;3)-[alpha-D-Man-(1-&gt;6)]-alpha-D-Man-(1-&gt;6)]-beta-D-Man-(1-&gt;4)-beta-D-GlcNAc-(1-&gt;4)-beta-D-GlcNAc)-L-asparaginyl-[protein] (N-glucan mannose isomer 5A1,2) + 4 beta-D-mannose. The enzyme catalyses N(4)-(alpha-D-Man-(1-&gt;2)-alpha-D-Man-(1-&gt;2)-alpha-D-Man-(1-&gt;3)-[alpha-D-Man-(1-&gt;3)-[alpha-D-Man-(1-&gt;2)-alpha-D-Man-(1-&gt;6)]-alpha-D-Man-(1-&gt;6)]-beta-D-Man-(1-&gt;4)-beta-D-GlcNAc-(1-&gt;4)-beta-D-GlcNAc)-L-asparaginyl-[protein] (N-glucan mannose isomer 8A1,2,3B1,3) + 3 H2O = N(4)-(alpha-D-Man-(1-&gt;3)-[alpha-D-Man-(1-&gt;3)-[alpha-D-Man-(1-&gt;6)]-alpha-D-Man-(1-&gt;6)]-beta-D-Man-(1-&gt;4)-beta-D-GlcNAc-(1-&gt;4)-beta-D-GlcNAc)-L-asparaginyl-[protein] (N-glucan mannose isomer 5A1,2) + 3 beta-D-mannose. Its pathway is protein modification; protein glycosylation. In terms of biological role, may be involved in endoplasmic reticulum-associated degradation (ERAD). This Xenopus laevis (African clawed frog) protein is ER degradation-enhancing alpha-mannosidase-like protein 3 (edem3).